The chain runs to 170 residues: Phosphopantetheine adenylyltransferase (170 aa).

T10 contributes to the substrate binding site. ATP-binding positions include 10 to 11 (TF) and H18. Residues K42, V79, and R93 each contribute to the substrate site. ATP contacts are provided by residues 94–96 (GLR), E104, and 129–135 (TQFISST).

This sequence belongs to the bacterial CoaD family. As to quaternary structure, homohexamer. Requires Mg(2+) as cofactor.

It localises to the cytoplasm. It carries out the reaction (R)-4'-phosphopantetheine + ATP + H(+) = 3'-dephospho-CoA + diphosphate. Its pathway is cofactor biosynthesis; coenzyme A biosynthesis; CoA from (R)-pantothenate: step 4/5. In terms of biological role, reversibly transfers an adenylyl group from ATP to 4'-phosphopantetheine, yielding dephospho-CoA (dPCoA) and pyrophosphate. The polypeptide is Phosphopantetheine adenylyltransferase (Parvibaculum lavamentivorans (strain DS-1 / DSM 13023 / NCIMB 13966)).